A 459-amino-acid chain; its full sequence is UNC93-like protein 1 (459 aa).

The tract at residues 1-26 (MNVRDEGKTTAEKHGGGEENKSPENK) is disordered. The next 11 helical transmembrane spans lie at 38–58 (LMGF…GMGG), 73–93 (AVYT…NVLG), 96–116 (LTLA…LYYN), 122–142 (AFAI…WAGE), 159–179 (IALF…IPFI), 195–215 (YIAF…ILPA), 251–271 (LLIV…FNNV), 287–307 (FYWG…DFSF), 314–334 (GFTG…GGLA), 355–375 (GIEF…DAMY), and 425–445 (LIVN…LVYF).

It belongs to the unc-93 family.

It is found in the membrane. The polypeptide is UNC93-like protein 1 (Arabidopsis thaliana (Mouse-ear cress)).